The sequence spans 231 residues: Uracil phosphoribosyltransferase (231 aa).

Residue 38-42 (KGLVR) coordinates GTP. 5-phospho-alpha-D-ribose 1-diphosphate-binding positions include Arg87, Arg112, and 140–148 (DPMIATGST). Residues Ile203 and 208-210 (GDA) contribute to the uracil site. Asp209 lines the 5-phospho-alpha-D-ribose 1-diphosphate pocket.

The protein belongs to the UPRTase family. Requires Mg(2+) as cofactor.

It carries out the reaction UMP + diphosphate = 5-phospho-alpha-D-ribose 1-diphosphate + uracil. Its pathway is pyrimidine metabolism; UMP biosynthesis via salvage pathway; UMP from uracil: step 1/1. Its activity is regulated as follows. Allosterically activated by GTP. Its function is as follows. Catalyzes the conversion of uracil and 5-phospho-alpha-D-ribose 1-diphosphate (PRPP) to UMP and diphosphate. The protein is Uracil phosphoribosyltransferase of Methanococcus maripaludis (strain C7 / ATCC BAA-1331).